The following is a 207-amino-acid chain: Early nodulin-like protein 11 (207 aa).

The first 24 residues, 1–24 (MVSLISIVSVVFLLFTTFYHFGEA), serve as a signal peptide directing secretion. The region spanning 25 to 130 (RIINVGGSLD…GEKVTVVVQS (106 aa)) is the Phytocyanin domain. N-linked (GlcNAc...) asparagine glycosylation occurs at N43. An intrachain disulfide couples C83 to C118. The disordered stretch occupies residues 129 to 179 (QSPNHPKPGPAAVTPTLPPKPSTTPAAPAPAPPTPSPKSSTSTMAPAPAPA). Positions 144-164 (TLPPKPSTTPAAPAPAPPTPS) are enriched in pro residues. Low complexity predominate over residues 165 to 179 (PKSSTSTMAPAPAPA). The GPI-anchor amidated serine moiety is linked to residue S181. The propeptide at 182-207 (SAVGLVAGNGIFWASTLVAVIGLAFA) is removed in mature form.

Belongs to the early nodulin-like (ENODL) family. Confined to flowers and siliques.

It localises to the cell membrane. Functionally, may act as a carbohydrate transporter. Required, together with ENODL11, ENODL12, ENODL13, ENODL14 and ENODL15, for male-female communication and pollen tube reception and burst at the synergid cell surface of the female gametophyte. This Arabidopsis thaliana (Mouse-ear cress) protein is Early nodulin-like protein 11.